The primary structure comprises 285 residues: HTH-type transcriptional regulator MurR (285 aa).

Residues 1–77 (MLYLTKISNA…MALIGEYSAS (77 aa)) enclose the HTH rpiR-type domain. Residues 37-56 (SRQMAKQLGISQSSIVKFAQ) constitute a DNA-binding region (H-T-H motif). The 152-residue stretch at 128–279 (IIEVISKAPF…SLKMIQRSSE (152 aa)) folds into the SIS domain.

As to quaternary structure, homotetramer.

Its pathway is amino-sugar metabolism; N-acetylmuramate degradation [regulation]. In terms of biological role, represses the expression of the murPQ operon involved in the uptake and degradation of N-acetylmuramic acid (MurNAc). Binds to two adjacent inverted repeats within the operator region. MurNAc 6-phosphate, the substrate of MurQ, is the specific inducer that weakens binding of MurR to the operator. This is HTH-type transcriptional regulator MurR from Shigella boydii serotype 18 (strain CDC 3083-94 / BS512).